The primary structure comprises 362 residues: Phosphoserine aminotransferase (362 aa).

Arg-43 is an L-glutamate binding site. Pyridoxal 5'-phosphate is bound by residues 77-78, Trp-103, Thr-153, Asp-173, and Gln-196; that span reads AR. Residue Lys-197 is modified to N6-(pyridoxal phosphate)lysine.

The protein belongs to the class-V pyridoxal-phosphate-dependent aminotransferase family. SerC subfamily. Homodimer. Pyridoxal 5'-phosphate serves as cofactor.

The protein localises to the cytoplasm. The catalysed reaction is O-phospho-L-serine + 2-oxoglutarate = 3-phosphooxypyruvate + L-glutamate. It carries out the reaction 4-(phosphooxy)-L-threonine + 2-oxoglutarate = (R)-3-hydroxy-2-oxo-4-phosphooxybutanoate + L-glutamate. Its pathway is amino-acid biosynthesis; L-serine biosynthesis; L-serine from 3-phospho-D-glycerate: step 2/3. It functions in the pathway cofactor biosynthesis; pyridoxine 5'-phosphate biosynthesis; pyridoxine 5'-phosphate from D-erythrose 4-phosphate: step 3/5. Catalyzes the reversible conversion of 3-phosphohydroxypyruvate to phosphoserine and of 3-hydroxy-2-oxo-4-phosphonooxybutanoate to phosphohydroxythreonine. The chain is Phosphoserine aminotransferase from Legionella pneumophila (strain Corby).